A 169-amino-acid chain; its full sequence is UPF0303 protein BCAN_A1444 (169 aa).

This sequence belongs to the UPF0303 family.

This Brucella canis (strain ATCC 23365 / NCTC 10854 / RM-666) protein is UPF0303 protein BCAN_A1444.